The sequence spans 527 residues: Cyclin-L1 (527 aa).

Residues 1–37 (MASGPHPTSTAAAASASSAAPSAGGSSSGTTTTTTTT) are disordered. Cyclin-like regions lie at residues 89 to 191 (ELIQ…RVLK) and 204 to 288 (KIIV…ETLR). The residue at position 326 (Thr326) is a Phosphothreonine. The interval 327 to 527 (PALSTLGGFS…SRSGHGRHRR (201 aa)) is disordered. A phosphoserine mark is found at Ser336 and Ser339. Glycyl lysine isopeptide (Lys-Gly) (interchain with G-Cter in SUMO2) cross-links involve residues Lys340 and Lys348. The segment covering 343–353 (SPREVKAEEKS) has biased composition (basic and acidic residues). A phosphoserine mark is found at Ser353 and Ser356. Basic and acidic residues predominate over residues 362–371 (VKKEPEDRQQ). Lys363 is covalently cross-linked (Glycyl lysine isopeptide (Lys-Gly) (interchain with G-Cter in SUMO2)). A Phosphoserine modification is found at Ser375. Basic residues-rich tracts occupy residues 383-419 (DSKR…RRSR), 439-453 (RRHH…KAKH), 461-477 (SNRH…RSQS), and 487-499 (KKHR…HRDR). An RS region spans residues 391–433 (RSASRSRSRTRSRSRSHTPRRHYNNRRSRSGTYSSRSRSRSRS). A Phosphoserine modification is found at Ser446. The span at 500 to 509 (RERSRSFERS) shows a compositional bias: basic and acidic residues. Positions 510-527 (HKGKHHGGSRSGHGRHRR) are enriched in basic residues.

Belongs to the cyclin family. Cyclin L subfamily. In terms of assembly, interacts with POLR2A via its hyperphosphorylated C-terminal domain (CTD). Interacts with CDK11A, CDK11B, CDK12 and CDK13. May form a ternary complex with CDK11B and casein kinase II (CKII). Interacts with pre-mRNA-splicing factors, including at least SRSF1, SRSF2 AND SRSF7/SLU7. In terms of tissue distribution, ubiquitous with higher level in liver; expressed in striatal neurons.

The protein resides in the nucleus speckle. It localises to the nucleus. It is found in the nucleoplasm. Functionally, involved in pre-mRNA splicing. Functions in association with cyclin-dependent kinases (CDKs). May play a role in the regulation of RNA polymerase II (pol II). Inhibited by the CDK-specific inhibitor CDKN1A/p21. In Rattus norvegicus (Rat), this protein is Cyclin-L1 (Ccnl1).